The following is a 617-amino-acid chain: Elongation factor 4 (617 aa).

The tr-type G domain occupies 17 to 198; the sequence is AIIRNFCIIA…KIVRDLPAPV (182 aa). Residues 29-34 and 145-148 each bind GTP; these read DHGKST and NKID.

The protein belongs to the TRAFAC class translation factor GTPase superfamily. Classic translation factor GTPase family. LepA subfamily.

It is found in the cell membrane. It catalyses the reaction GTP + H2O = GDP + phosphate + H(+). In terms of biological role, required for accurate and efficient protein synthesis under certain stress conditions. May act as a fidelity factor of the translation reaction, by catalyzing a one-codon backward translocation of tRNAs on improperly translocated ribosomes. Back-translocation proceeds from a post-translocation (POST) complex to a pre-translocation (PRE) complex, thus giving elongation factor G a second chance to translocate the tRNAs correctly. Binds to ribosomes in a GTP-dependent manner. This Arthrobacter sp. (strain FB24) protein is Elongation factor 4.